The following is a 211-amino-acid chain: Protein N-terminal glutamine amidohydrolase (211 aa).

Active-site residues include Cys24, His78, and Asp94.

Belongs to the NTAQ1 family. In terms of assembly, monomer.

It catalyses the reaction N-terminal L-glutaminyl-[protein] + H2O = N-terminal L-glutamyl-[protein] + NH4(+). Its function is as follows. Mediates the side-chain deamidation of N-terminal glutamine residues to glutamate, an important step in N-end rule pathway of protein degradation. Conversion of the resulting N-terminal glutamine to glutamate renders the protein susceptible to arginylation, polyubiquitination and degradation as specified by the N-end rule. Does not act on substrates with internal or C-terminal glutamine and does not act on non-glutamine residues in any position. The protein is Protein N-terminal glutamine amidohydrolase (tun) of Anopheles gambiae (African malaria mosquito).